The following is an 819-amino-acid chain: Protein kinase C-binding protein NELL2 (819 aa).

An N-terminal signal peptide occupies residues 1–24; the sequence is MHAMESRVLLRTFCVILGLGAVWG. 4 N-linked (GlcNAc...) asparagine glycosylation sites follow: asparagine 56, asparagine 228, asparagine 296, and asparagine 301. The region spanning 67 to 231 is the Laminin G-like domain; sequence PRSIKASTAT…AQCPDLNRTC (165 aa). Positions 275–334 constitute a VWFC 1 domain; that stretch reads RTCTVKGTTYRESESWTDGCKNCTCLNGTIQCETLVCPAPDCPPKSAPAYVDGKCCKECK. In terms of domain architecture, EGF-like 1 spans 400–442; sequence GYDFCSEKHTCMENSVCRNLNDRAVCSCRDGFRALREDNAYCE. Cystine bridges form between cysteine 404–cysteine 416, cysteine 410–cysteine 425, and cysteine 427–cysteine 441. Residues aspartate 443, isoleucine 444, and glutamate 446 each contribute to the Ca(2+) site. The EGF-like 2; calcium-binding domain maps to 443 to 484; it reads DIDECAEGRHYCRENTMCVNTPGSFMCICKTGYIRIDDYSCT. 9 disulfides stabilise this stretch: cysteine 447-cysteine 460, cysteine 454-cysteine 469, cysteine 471-cysteine 483, cysteine 489-cysteine 502, cysteine 496-cysteine 511, cysteine 513-cysteine 524, cysteine 528-cysteine 538, cysteine 532-cysteine 544, and cysteine 546-cysteine 555. 3 residues coordinate Ca(2+): asparagine 462, threonine 463, and serine 466. The EGF-like 3; calcium-binding domain maps to 485–525; sequence EHDECLTNQHNCDENALCFNTVGGHNCVCKPGYTGNGTTCK. A glycan (N-linked (GlcNAc...) asparagine) is linked at asparagine 520. The EGF-like 4 domain occupies 526–556; sequence AFCKDGCRNGGACIAANVCACPQGFTGPSCE. O-linked (GlcNAc...) threonine glycosylation is present at threonine 551. Ca(2+)-binding residues include aspartate 558, isoleucine 559, and glutamate 561. An EGF-like 5; calcium-binding domain is found at 558-604; it reads DIDECSEGFVQCDSRANCINLPGWYHCECRDGYHDNGMFAPGGESCE. 3 disulfides stabilise this stretch: cysteine 562-cysteine 575, cysteine 569-cysteine 584, and cysteine 586-cysteine 603. Residues asparagine 577, leucine 578, and tryptophan 581 each contribute to the Ca(2+) site. Ca(2+) contacts are provided by aspartate 605, isoleucine 606, and glutamate 608. Residues 605-640 form the EGF-like 6; calcium-binding domain; it reads DIDECGTGRHSCTNDTICFNLDGGYDCRCPHGKNCT. 3 disulfide bridges follow: cysteine 609–cysteine 622, cysteine 616–cysteine 631, and cysteine 633–cysteine 639. The N-linked (GlcNAc...) asparagine glycan is linked to asparagine 618. 3 residues coordinate Ca(2+): asparagine 624, leucine 625, and glycine 628. An N-linked (GlcNAc...) asparagine glycan is attached at asparagine 638. Positions 701–759 constitute a VWFC 2 domain; that stretch reads SQCLHQNGETVYNSGDTWVQDCRQCRCLQGEVDCWPLACPEVECEFSVLPENECCPRCV.

Homotrimer. Interacts with NICOL1; this interaction triggers epididymal differentiation. Interacts (via EGF domains) with ROBO3 (via FN domains); binding to ROBO3 induces repulsive guidance cue for commissural axons. As to expression, expressed in brain and testis but not in epididymis. Expressed in regions flanking the commissural axon trajectory, including the ventral horn.

It is found in the secreted. In terms of biological role, plays multiple roles in neural tissues, regulates neuronal proliferation, survival, differentiation, polarization, as well as axon guidance and synaptic functions. Plays an important role in axon development during neuronal differentiation through the MAPK intracellular signaling pathway. Via binding to its receptor ROBO3, plays a role in axon guidance, functioning as a repulsive axon guidance cue that contributes to commissural axon guidance to the midline. Required for neuron survival through the modulation of MAPK signaling pathways too. Involved in the regulation of hypothalamic GNRH secretion and the control of puberty. Functionally, epididymal-secreted protein that signals through a ROS1-pathway to regulate the epididymal initial segment (IS) maturation, sperm maturation and male fertility. The protein is Protein kinase C-binding protein NELL2 of Mus musculus (Mouse).